Here is a 445-residue protein sequence, read N- to C-terminus: rRNA methyltransferase 3B, mitochondrial (445 aa).

The transit peptide at 1–37 (MATRIASMRFRCALFQSALTLGRNEVNIKRYVRRRRA) directs the protein to the mitochondrion. 2 disordered regions span residues 52–90 (EGVI…SQPV) and 311–334 (HSTT…SDYG). 3 stretches are compositionally biased toward polar residues: residues 54-70 (VISQ…NDIT), 78-90 (IENP…SQPV), and 311-324 (HSTT…NTTP). G387, I411, and L420 together coordinate S-adenosyl-L-methionine.

It belongs to the class IV-like SAM-binding methyltransferase superfamily. RNA methyltransferase TrmH family.

The protein localises to the mitochondrion. It carries out the reaction a uridine in rRNA + S-adenosyl-L-methionine = a 2'-O-methyluridine in rRNA + S-adenosyl-L-homocysteine + H(+). S-adenosyl-L-methionine-dependent 2'-O-ribose methyltransferase that catalyzes the formation of 2'-O-methylguanosine at position 1485 (Gm1485) in the mitochondrial large subunit ribosomal RNA (mtLSU rRNA), a conserved modification in the peptidyl transferase domain of the mtLSU rRNA. Also required for formation of 2'-O-methyluridine at position 1484 (Um1484) mediated by MRM2. In Danio rerio (Zebrafish), this protein is rRNA methyltransferase 3B, mitochondrial.